The primary structure comprises 134 residues: Phosphoribosyl-AMP cyclohydrolase (134 aa).

Mg(2+) is bound at residue Asp-80. Cys-81 is a binding site for Zn(2+). Mg(2+) is bound by residues Asp-82 and Asp-84. Zn(2+) contacts are provided by Cys-98 and Cys-105.

Belongs to the PRA-CH family. Homodimer. Mg(2+) serves as cofactor. It depends on Zn(2+) as a cofactor.

It is found in the cytoplasm. It carries out the reaction 1-(5-phospho-beta-D-ribosyl)-5'-AMP + H2O = 1-(5-phospho-beta-D-ribosyl)-5-[(5-phospho-beta-D-ribosylamino)methylideneamino]imidazole-4-carboxamide. It participates in amino-acid biosynthesis; L-histidine biosynthesis; L-histidine from 5-phospho-alpha-D-ribose 1-diphosphate: step 3/9. Its function is as follows. Catalyzes the hydrolysis of the adenine ring of phosphoribosyl-AMP. The polypeptide is Phosphoribosyl-AMP cyclohydrolase (Herminiimonas arsenicoxydans).